A 268-amino-acid chain; its full sequence is tRNA pseudouridine synthase A (268 aa).

Catalysis depends on D52, which acts as the Nucleophile. Residue Y110 participates in substrate binding.

This sequence belongs to the tRNA pseudouridine synthase TruA family. As to quaternary structure, homodimer.

The enzyme catalyses uridine(38/39/40) in tRNA = pseudouridine(38/39/40) in tRNA. Its function is as follows. Formation of pseudouridine at positions 38, 39 and 40 in the anticodon stem and loop of transfer RNAs. This is tRNA pseudouridine synthase A from Prochlorococcus marinus subsp. pastoris (strain CCMP1986 / NIES-2087 / MED4).